We begin with the raw amino-acid sequence, 161 residues long: MSLIIKSILNADAEARYFRPGELAQIKGFNASAASRLRLVQALTENRERIVKQSANQLFQKRPDIVSPGGNAYGQDMTATCLRDMDYYLRLITYSIVAGDSTPIQEIGVIGVREMYRSLGTPIEAVAESIRAMKYVATSMMSVEDRAEVDTYFDYLIGAMQ.

The residue at position 71 (N71) is an N4-methylasparagine. C81 is a (2R,3E)-phycocyanobilin binding site.

This sequence belongs to the phycobiliprotein family. As to quaternary structure, heterohexamer of two alpha chains, one alpha-B chain and three beta chains. Contains one covalently linked phycocyanobilin chromophore. The chromophore is added by phycocyanobilin lyase CpcS 1.

The protein localises to the cellular thylakoid membrane. In terms of biological role, light-harvesting photosynthetic bile pigment-protein from the phycobiliprotein complex. Allophycocyanin has a maximum absorption at approximately 650 to 653 nanometers. The chain is Putative allophycocyanin subunit alpha 2 (apcA2) from Nostoc sp. (strain PCC 7120 / SAG 25.82 / UTEX 2576).